Consider the following 348-residue polypeptide: D-alanine--D-alanine ligase (348 aa).

Residues 132-334 enclose the ATP-grasp domain; the sequence is KRILEVAGVP…YSDLIKELVV (203 aa). 162 to 217 contributes to the ATP binding site; it reads LEKLTFPVFVKPANMGSSVGISKAENESELRSAIDLALKYDSRILIEQGVVAREIE. Mg(2+) is bound by residues Asp288, Glu301, and Asn303.

Belongs to the D-alanine--D-alanine ligase family. It depends on Mg(2+) as a cofactor. The cofactor is Mn(2+).

The protein resides in the cytoplasm. The enzyme catalyses 2 D-alanine + ATP = D-alanyl-D-alanine + ADP + phosphate + H(+). Its pathway is cell wall biogenesis; peptidoglycan biosynthesis. Its function is as follows. Cell wall formation. The polypeptide is D-alanine--D-alanine ligase (Streptococcus thermophilus (strain ATCC BAA-250 / LMG 18311)).